Here is a 258-residue protein sequence, read N- to C-terminus: F-box/SPRY domain-containing protein 1 (258 aa).

The region spanning 6 to 54 (TEYAPDIPDNVLELIFSYLKLQDLRNCSLVCKSWNRFLNDENNEVWRAQ) is the F-box domain. The 193-residue stretch at 64 to 256 (FKTDLLSVVP…ISMVYLGPPL (193 aa)) folds into the B30.2/SPRY domain.

It belongs to the FBXO45/Fsn family. As to quaternary structure, component of an E3 ubiquitin ligase complex composed of hiw and Fsn.

Its subcellular location is the synapse. The protein operates within protein modification; protein ubiquitination. Its function is as follows. Required in the presynaptic motoneuron to down-regulate the levels of wnd and restrain synaptic terminal growth at the neuromuscular junction (NMJ). In Aedes aegypti (Yellowfever mosquito), this protein is F-box/SPRY domain-containing protein 1.